Here is a 200-residue protein sequence, read N- to C-terminus: TATA-box-binding protein 1 (200 aa).

N-acetylthreonine is present on T2. 2 consecutive repeat copies span residues L25 to V101 and I115 to L192.

This sequence belongs to the TBP family. As to quaternary structure, belongs to the TFIID complex together with the TBP-associated factors (TAFs). Binds DNA as monomer. Interacts with TAF1 (via N-terminus). Interacts with MEE12/CCG1. Associates with PWP2 in the nucleus. Component of a nuclear protein complex containing at least TATA binding proteins (TBPs, e.g. TBP1 and TBP2) and ATX1.

It localises to the nucleus. Its function is as follows. General transcription factor that functions at the core of the DNA-binding multiprotein factor TFIID. Binding of TFIID to the TATA box is the initial transcriptional step of the pre-initiation complex (PIC), playing a role in the activation of eukaryotic genes transcribed by RNA polymerase II. The chain is TATA-box-binding protein 1 from Arabidopsis thaliana (Mouse-ear cress).